We begin with the raw amino-acid sequence, 284 residues long: Shikimate dehydrogenase (NADP(+)) (284 aa).

Residues 20-22 (SIS) and Ser67 each bind shikimate. The Proton acceptor role is filled by Lys71. Asp83 is a binding site for NADP(+). Shikimate contacts are provided by Asn92 and Asp107. Residues 129–133 (GAGGA) and Ile227 contribute to the NADP(+) site. Residue Tyr229 coordinates shikimate. An NADP(+)-binding site is contributed by Gly250.

The protein belongs to the shikimate dehydrogenase family. Homodimer.

It catalyses the reaction shikimate + NADP(+) = 3-dehydroshikimate + NADPH + H(+). It functions in the pathway metabolic intermediate biosynthesis; chorismate biosynthesis; chorismate from D-erythrose 4-phosphate and phosphoenolpyruvate: step 4/7. Involved in the biosynthesis of the chorismate, which leads to the biosynthesis of aromatic amino acids. Catalyzes the reversible NADPH linked reduction of 3-dehydroshikimate (DHSA) to yield shikimate (SA). This is Shikimate dehydrogenase (NADP(+)) from Streptococcus pneumoniae (strain ATCC 700669 / Spain 23F-1).